The primary structure comprises 327 residues: GTPase Obg (327 aa).

The region spanning 1 to 159 (MQFIDQANII…WEVQLELKLL (159 aa)) is the Obg domain. Positions 160 to 327 (AEVGIIGLPN…SLLSEVWNRI (168 aa)) constitute an OBG-type G domain. ATP is bound by residues 166–173 (GLPNAGKS), 191–195 (FTTLI), 213–216 (DIPG), 280–283 (NKKE), and 309–311 (SSA). 2 residues coordinate Mg(2+): S173 and T193.

This sequence belongs to the TRAFAC class OBG-HflX-like GTPase superfamily. OBG GTPase family. Monomer. Requires Mg(2+) as cofactor.

It localises to the cytoplasm. Its function is as follows. An essential GTPase which binds GTP, GDP and possibly (p)ppGpp with moderate affinity, with high nucleotide exchange rates and a fairly low GTP hydrolysis rate. Plays a role in control of the cell cycle, stress response, ribosome biogenesis and in those bacteria that undergo differentiation, in morphogenesis control. In Prochlorococcus marinus (strain MIT 9515), this protein is GTPase Obg.